The following is a 906-amino-acid chain: Cadherin-2 (906 aa).

The N-terminal stretch at 1-25 (MCRIVGAPRTLLPLLAALLQASVDA) is a signal peptide. Positions 26–159 (SGEISLCKTG…HNGYLQRQKR (134 aa)) are excised as a propeptide. Phosphoserine is present on residues S96 and S135. Cadherin domains follow at residues 160-267 (DWVI…RPEF), 268-392 (LHQV…GEVP), 393-497 (ENRV…NPYF), 498-603 (APNP…DNAP), and 604-714 (QVLP…DVDR). Residues 160–724 (DWVIPPINLP…IVGAGLGTGA (565 aa)) are Extracellular-facing. E170 is a binding site for Ca(2+). N190 carries N-linked (GlcNAc...) asparagine glycosylation. Ca(2+) is bound by residues D226, E228, D259, M260, N261, D262, and N263. N-linked (GlcNAc...) asparagine glycosylation is present at N273. Ca(2+) contacts are provided by D293, D295, and N301. A glycan (N-linked (GlcNAc...) asparagine) is linked at N325. A Ca(2+)-binding site is contributed by D353. N-linked (GlcNAc...) asparagine glycosylation is found at N357, N402, N572, N622, N651, and N692. The helical transmembrane segment at 725-746 (IIAILLCIIILLILVLMFVVWM) threads the bilayer. Over 747-906 (KRRDKERQAK…LADMYGGGDD (160 aa)) the chain is Cytoplasmic. A compositionally biased stretch (low complexity) spans 863–880 (SGSTAGSLSSLNSSSSGG). A disordered region spans residues 863-884 (SGSTAGSLSSLNSSSSGGEQDY).

In terms of assembly, homodimer (via extracellular region). Can also form heterodimers with other cadherins (via extracellular region). Dimerization occurs in trans, i.e. with a cadherin chain from another cell. Interacts with CDCP1. Interacts with PCDH8; this complex may also include TAOK2. The interaction with PCDH8 may lead to internalization through TAOK2/p38 MAPK pathway. Identified in a complex containing FGFR4, NCAM1, CDH2, PLCG1, FRS2, SRC, SHC1, GAP43 and CTTN. May interact with OBSCN (via protein kinase domain 2). Interacts with FBXO45. In terms of processing, cleaved by MMP24. Ectodomain cleavage leads to the generation of a soluble 90 kDa N-terminal soluble fragment and a 45 kDa membrane-bound C-terminal fragment 1 (CTF1), which is further cleaved by gamma-secretase into a 35 kDa. Cleavage in neural stem cells by MMP24 affects CDH2-mediated anchorage of neural stem cells to ependymocytes in the adult subependymal zone, leading to modulate neural stem cell quiescence. Post-translationally, may be phosphorylated by OBSCN. In terms of tissue distribution, detected in liver, kidney, heart and brain capillaries.

It is found in the cell membrane. The protein resides in the sarcolemma. Its subcellular location is the cell junction. It localises to the cell surface. The protein localises to the desmosome. It is found in the adherens junction. In terms of biological role, calcium-dependent cell adhesion protein; preferentially mediates homotypic cell-cell adhesion by dimerization with a CDH2 chain from another cell. Cadherins may thus contribute to the sorting of heterogeneous cell types. Acts as a regulator of neural stem cells quiescence by mediating anchorage of neural stem cells to ependymocytes in the adult subependymal zone: upon cleavage by MMP24, CDH2-mediated anchorage is affected, leading to modulate neural stem cell quiescence. Plays a role in cell-to-cell junction formation between pancreatic beta cells and neural crest stem (NCS) cells, promoting the formation of processes by NCS cells. Required for proper neurite branching. Required for pre- and postsynaptic organization. CDH2 may be involved in neuronal recognition mechanism. In hippocampal neurons, may regulate dendritic spine density. This chain is Cadherin-2 (CDH2), found in Bos taurus (Bovine).